The primary structure comprises 208 residues: Transmembrane protein 222 (208 aa).

The segment at 1–26 (MAEAEGSSLLLLPPPPPPPRMAEVEA) is disordered. Residues 1–55 (MAEAEGSSLLLLPPPPPPPRMAEVEAPTAAETDMKQYQGSGGVAMDVERSRFPYC) lie on the Extracellular side of the membrane. The helical transmembrane segment at 56-76 (VVWTPIPVLTWFFPIIGHMGI) threads the bilayer. Over 77 to 164 (CTSTGVIRDF…MRYNNSTNWN (88 aa)) the chain is Cytoplasmic. A helical membrane pass occupies residues 165–185 (MVTLCFFCLLYGKYVSVGAFV). A topological domain (extracellular) is located at residue Lys186. A helical transmembrane segment spans residues 187–207 (TWLPFILLLGIILTVSLVFNL). A topological domain (cytoplasmic) is located at residue Arg208.

Widely expressed. The highest expression is observed in the brain.

It is found in the membrane. The protein localises to the cell projection. The protein resides in the dendrite. This is Transmembrane protein 222 (TMEM222) from Homo sapiens (Human).